The sequence spans 181 residues: uncharacterized protein (181 aa).

This is an uncharacterized protein from Acanthamoeba polyphaga (Amoeba).